The sequence spans 345 residues: MKEFDLESYDYYLPKELIANYPVLPKEKAKLLVYERRSQKITHTTFEHVLDFFPKNALVVLNDTKVMKARLFGSKHALLPSKTTEVFFHRFFKDNTALTQIKGKIKAGDKIFFDANYHAEVLELLHNGQRLIAFYNHKTPLNQENILKLLEQYGHMPLPPYIKRTDESLDAHEYQSVFAKHIGAVAAPTASLHFSQNTLEKLLKDFKHAFLTLHVGAGTFLGVETKDIREHQIHTEILHIPKKSQEILRESQEVLCIGTTALRSVEYFKRLKNSNQESFECDIFLHLANPIQHVNYLLTNFHLPKSSLLMLVSAMIGLEKTKEIYKIAIEKKYRFYSYGDGMLIL.

It belongs to the QueA family. In terms of assembly, monomer.

The protein resides in the cytoplasm. The catalysed reaction is 7-aminomethyl-7-carbaguanosine(34) in tRNA + S-adenosyl-L-methionine = epoxyqueuosine(34) in tRNA + adenine + L-methionine + 2 H(+). The protein operates within tRNA modification; tRNA-queuosine biosynthesis. In terms of biological role, transfers and isomerizes the ribose moiety from AdoMet to the 7-aminomethyl group of 7-deazaguanine (preQ1-tRNA) to give epoxyqueuosine (oQ-tRNA). In Helicobacter pylori (strain HPAG1), this protein is S-adenosylmethionine:tRNA ribosyltransferase-isomerase.